A 426-amino-acid chain; its full sequence is Enolase (426 aa).

A disordered region spans residues 32–53 (TGRAAVPSGASTGAYEAHEQRD). Q163 provides a ligand contact to (2R)-2-phosphoglycerate. Catalysis depends on E205, which acts as the Proton donor. Mg(2+) contacts are provided by D242, E285, and D312. K337, R366, S367, and K388 together coordinate (2R)-2-phosphoglycerate. The active-site Proton acceptor is the K337.

Belongs to the enolase family. Mg(2+) is required as a cofactor.

Its subcellular location is the cytoplasm. It localises to the secreted. The protein resides in the cell surface. It carries out the reaction (2R)-2-phosphoglycerate = phosphoenolpyruvate + H2O. Its pathway is carbohydrate degradation; glycolysis; pyruvate from D-glyceraldehyde 3-phosphate: step 4/5. Functionally, catalyzes the reversible conversion of 2-phosphoglycerate (2-PG) into phosphoenolpyruvate (PEP). It is essential for the degradation of carbohydrates via glycolysis. The protein is Enolase of Hyphomonas neptunium (strain ATCC 15444).